A 331-amino-acid polypeptide reads, in one-letter code: Nucleotide sugar transporter SLC35B4 (331 aa).

Transmembrane regions (helical) follow at residues 4–24 (ALAVGLVFAGCCSNVIFLELL), 30–50 (GCGNIVTFAQFLFIAVEGFLF), 59–79 (PAIPIRYYAIMVTMFFTVSVV), 92–112 (LHMIFRSGSLIANMILGIIIL), 117–137 (SIFKYTSIALVSVGIFICTFM), 153–173 (GFQAFVWWLLGIGALTFALLM), 201–221 (ALPLPGFIFLASDIYDHAVLF), 229–249 (IPGIGVTLPIMWFYLLMNIIT), 251–267 (YVCIRGVFILTTECASL), 268–288 (TVTLVVTLRKFVSLIFSILYF), and 291–311 (PFTLWHWLGTLFVFIGTLMYT). The Mediates endoplasmic reticulum retention signature appears at 326 to 331 (KDNKKN).

This sequence belongs to the nucleotide-sugar transporter family. SLC35B subfamily.

The protein localises to the endoplasmic reticulum membrane. The catalysed reaction is UDP-N-acetyl-alpha-D-glucosamine(in) + UDP-alpha-D-glucuronate(out) = UDP-N-acetyl-alpha-D-glucosamine(out) + UDP-alpha-D-glucuronate(in). It carries out the reaction UDP-alpha-D-xylose(in) + UDP-alpha-D-glucuronate(out) = UDP-alpha-D-xylose(out) + UDP-alpha-D-glucuronate(in). Antiporter that transports nucleotide sugars across the endoplasmic reticulum (ER) membrane in exchange for another nucleotide sugar. May couple UDP-alpha-D-glucuronate (UDP-GlcA) or UDP-alpha-D-xylose (UDP-Xyl) efflux to UDP-alpha-D-glucuronate (UDP-GlcA) influx into the ER lumen, which in turn stimulates glucuronidation and excretion of endobiotics and xenobiotics. This Macaca fascicularis (Crab-eating macaque) protein is Nucleotide sugar transporter SLC35B4 (SLC35B4).